We begin with the raw amino-acid sequence, 201 residues long: Potassium-transporting ATPase KdpC subunit (201 aa).

The helical transmembrane segment at 12–34 (LLALTMITGLAYPLAVTGLATVL) threads the bilayer. Positions 73-102 (TVAPDPADSSKTVSAPYNAANSGGSNLGPT) are disordered. Polar residues predominate over residues 81–101 (SSKTVSAPYNAANSGGSNLGP).

This sequence belongs to the KdpC family. The system is composed of three essential subunits: KdpA, KdpB and KdpC.

The protein resides in the cell inner membrane. Functionally, part of the high-affinity ATP-driven potassium transport (or Kdp) system, which catalyzes the hydrolysis of ATP coupled with the electrogenic transport of potassium into the cytoplasm. This subunit acts as a catalytic chaperone that increases the ATP-binding affinity of the ATP-hydrolyzing subunit KdpB by the formation of a transient KdpB/KdpC/ATP ternary complex. The chain is Potassium-transporting ATPase KdpC subunit from Rhodopseudomonas palustris (strain ATCC BAA-98 / CGA009).